We begin with the raw amino-acid sequence, 1080 residues long: MSVKASGGSSVARPQLYQTLAVATITQAEQQDRFLGTGELNELATYFASGAKRLEIAQTLTENSEIIVSRAANRIFVGGSPMSFLEKPREAELAMATVAPGNVQEGMKLGTVTYVESRGGFLENLRSIFNSSPSGPTPPGFRPINVARYGPSNMAKSLRDLSWFLRYATYAIVAGDPNIIAVNTRGLREIIENACSGEPTIVALQEIKAASLSFFRQDAKATEIVSQYMDVLLTEFKAATPSNKLRQRPSGDQQGLQLPQIYFEAAERRPKFVMKPGLSASEKNEVIRAAYRQIFERDITRAYSLSVSDLESKVKNGDISMKEFVRRLAKSPLYQKQFYQPFINSRVIELAFRHILGRGPSSREEVQKYFSIISNGGLPALVDALVDSPEYSDYFGEETVPYLRGLGQEAQECRNWGPQQDLFNYSAPFRKVPQFITTFACLYDRPLPDQHPYGSGNDPLEIQFGAIFPKETRNPNTSPAPFSKDTRRILINQGPGINSQVSNPGARGEFPGSLGPKVFRLDQLPGTIGKKAAKGASIKFSESSTQAVIKAAYLQVFGRDVYEGQRLKVQEIKLENGQLSVREFIRALAKSDVFRKTYWTSLYVCKAIEYIHRRLLGRPTYGRQEINKYFDIAAKQGFYAVVDAIINSVEYSEAFGEDTVPYERYLTPSGVALRQLRVGSIREDVGGKVQKQETPLFVTLGTVTDTRTEPDIQFRINQGVSKQREQTKVFKQVANISDKAAVQTLISAAYRQIFERDVAPYIAKNEFSALESKLSNGEITVKEFIEGLGYSNLYIKEFYTPYPNTKVIELGTKHFLGRAPLDQVEIRKYNQILATQGIRAFIGALVSSAEYAEVFGEDTVPYRRYPTLPAANFPNTEKLYNQLTKQNDDLVVPSFKTVQPRLTLAGTSSSGRNGFTDLGRSSTSAQGQLGETANRCKPARIYRLSGTNQAETQLVINAIYSQVLDLFSSDIPANYRLNALEGKLQTGEISVREFVRELASSDIYCDRFYTPYPSAKVIEFLYRHLLGRAPATQEEISEYNKLMASRGLRAVVEAIVDSQEYARYFGEDVVPYPRSSSLGN.

The tract at residues 18–76 (QTLAVATITQAEQQDRFLGTGELNELATYFASGAKRLEIAQTLTENSEIIVSRAANRIF) is phycobilin-like 1. The phycobilin-like loop stretch occupies residues 77–144 (VGGSPMSFLE…GPTPPGFRPI (68 aa)). Residues 145–237 (NVARYGPSNM…YMDVLLTEFK (93 aa)) form a phycobilin-like 2 region. Cys195 is a binding site for (2R,3E)-phycocyanobilin. 4 PBS-linker domains span residues 252 to 432 (DQQG…FRKV), 514 to 693 (LGPK…QKQE), 710 to 888 (PDIQ…KQND), and 922 to 1080 (STSA…SLGN). A disordered region spans residues 906–930 (GTSSSGRNGFTDLGRSSTSAQGQLG).

Belongs to the phycobilisome linker protein family. As to quaternary structure, phycobilisomes of this organism are composed of a two cylinder core, from which six rods radiate. The core is mainly composed of allophycocyanin alpha and beta chains, and of three minor components: the allophycocyanin alpha-B chain, a 18.3 kDa polypeptide, and the anchor polypeptide L-CM. In terms of processing, contains one covalently linked bilin chromophore. This protein autochromophorylates.

The protein localises to the cellular thylakoid membrane. Functionally, this protein is postulated to act both as terminal energy acceptor (by its phycobilin-like domains) and as a linker polypeptide (by its repeats and arms) that stabilizes the phycobilisome core architecture. Has intrinsic bilin lyase activity. In Microchaete diplosiphon (Fremyella diplosiphon), this protein is Phycobiliprotein ApcE (apcE).